The sequence spans 446 residues: Peroxisomal biogenesis factor 3 (446 aa).

The Peroxisomal portion of the chain corresponds to 1–12 (MARTGLQRHRGK). The helical transmembrane segment at 13–33 (LLGTGAVLGGLVVAGVVAAVA) threads the bilayer. Topologically, residues 34–446 (AKRWVRRQQQ…SASVYSNFGV (413 aa)) are cytoplasmic. The segment at 101–122 (RAGEDDEQGSGGHASAGEGSVS) is disordered.

Belongs to the peroxin-3 family.

Its subcellular location is the peroxisome membrane. Involved in peroxisome biosynthesis. The sequence is that of Peroxisomal biogenesis factor 3 (PEX3) from Eremothecium gossypii (strain ATCC 10895 / CBS 109.51 / FGSC 9923 / NRRL Y-1056) (Yeast).